The following is a 450-amino-acid chain: NADP-specific glutamate dehydrogenase (450 aa).

Lys-114 is an active-site residue.

The protein belongs to the Glu/Leu/Phe/Val dehydrogenases family. As to quaternary structure, homohexamer.

The enzyme catalyses L-glutamate + NADP(+) + H2O = 2-oxoglutarate + NH4(+) + NADPH + H(+). The polypeptide is NADP-specific glutamate dehydrogenase (gdhA) (Botryotinia fuckeliana (Noble rot fungus)).